A 299-amino-acid polypeptide reads, in one-letter code: Bifunctional protein FolD 1 (299 aa).

Residues 168–170 (GRS), S193, and I234 contribute to the NADP(+) site.

Belongs to the tetrahydrofolate dehydrogenase/cyclohydrolase family. In terms of assembly, homodimer.

The catalysed reaction is (6R)-5,10-methylene-5,6,7,8-tetrahydrofolate + NADP(+) = (6R)-5,10-methenyltetrahydrofolate + NADPH. The enzyme catalyses (6R)-5,10-methenyltetrahydrofolate + H2O = (6R)-10-formyltetrahydrofolate + H(+). It functions in the pathway one-carbon metabolism; tetrahydrofolate interconversion. Catalyzes the oxidation of 5,10-methylenetetrahydrofolate to 5,10-methenyltetrahydrofolate and then the hydrolysis of 5,10-methenyltetrahydrofolate to 10-formyltetrahydrofolate. This is Bifunctional protein FolD 1 from Mesorhizobium japonicum (strain LMG 29417 / CECT 9101 / MAFF 303099) (Mesorhizobium loti (strain MAFF 303099)).